A 313-amino-acid chain; its full sequence is Ras-related GTP-binding protein A (313 aa).

GTP contacts are provided by S16, G17, G19, K20, T21, S22, T36, T42, G65, and H127. GDP-binding residues include G17, G19, K20, T21, and S22. GDP is bound by residues H127 and D130. K142 participates in a covalent cross-link: Glycyl lysine isopeptide (Lys-Gly) (interchain with G-Cter in ubiquitin). GDP-binding residues include L148 and I164. Residue I164 coordinates GTP. Residues K220, K230, and K244 each participate in a glycyl lysine isopeptide (Lys-Gly) (interchain with G-Cter in ubiquitin) cross-link. S309 is modified (phosphoserine).

It belongs to the GTR/RAG GTP-binding protein family. As to quaternary structure, can occur as a homodimer or as a heterodimer with RRAGC or RRAGD in a sequence-independent manner; heterodimerization stabilizes proteins of the heterodimer. The GTP-bound form of RRAGA (in complex with the GDP-bound form of RRAGC or RRAGD) interacts with RPTOR, thereby promoting recruitment of mTORC1 to the lysosomes. The Rag heterodimer interacts with SLC38A9; the probable amino acid sensor. The Rag heterodimer interacts with the Ragulator complex. The GTP-bound form of RRAGA interacts with NOL8. Component of the lysosomal folliculin complex (LFC), composed of FLCN, FNIP1 (or FNIP2), RagA/RRAGA or RagB/RRAGB GDP-bound, RagC/RRAGC or RagD/RRAGD GTP-bound, and Ragulator. Interacts with SH3BP4; the interaction with this negative regulator is most probably direct, preferentially occurs with the inactive GDP-bound form of RRAGA and is negatively regulated by amino acids. Interacts (polyubiquitinated) with TSC2. Interacts with SESN1, SESN2 and SESN3. Interacts with PIP4P1. Interacts with GPR137B. Interacts with WDR83; this interaction regulates the spatiotemporal localization of mTORC1 to the lysosomal surface. Post-translationally, polybiquitinated via 'Lys-63'-linked polyubiquitination by RNF152 in response to amino acid starvation: polyubiquitination of the GDP-bound inactive form by RNF152 promotes RRAGA inactivation and interaction with the GATOR1 complex. This does not affect RRAGA degradation.

It is found in the cytoplasm. The protein localises to the nucleus. The protein resides in the lysosome membrane. The catalysed reaction is GTP + H2O = GDP + phosphate + H(+). Its activity is regulated as follows. The activation of GTP-binding proteins is generally mediated by a guanine exchange factor (GEF), while inactivation through hydrolysis of bound GTP is catalyzed by a GTPase activating protein (GAP). The Ragulator complex functions as a GEF and promotes the active GTP-bound form. The GATOR1 complex functions as a GAP and stimulates RRAGA GTPase activity to turn it into its inactive GDP-bound form, preventing mTORC1 recruitment and activation. Guanine nucleotide-binding protein that plays a crucial role in the cellular response to amino acid availability through regulation of the mTORC1 signaling cascade. Forms heterodimeric Rag complexes with RagC/RRAGC or RagD/RRAGD and cycles between an inactive GDP-bound and an active GTP-bound form: RagA/RRAGA is in its active form when GTP-bound RagA/RRAGA forms a complex with GDP-bound RagC/RRAGC (or RagD/RRAGD) and in an inactive form when GDP-bound RagA/RRAGA heterodimerizes with GTP-bound RagC/RRAGC (or RagD/RRAGD). In its GTP-bound active form, promotes the recruitment of mTORC1 to the lysosomes and its subsequent activation by the GTPase RHEB. Involved in the RCC1/Ran-GTPase pathway. May play a direct role in a TNF-alpha signaling pathway leading to induction of cell death. This Bos taurus (Bovine) protein is Ras-related GTP-binding protein A.